We begin with the raw amino-acid sequence, 154 residues long: Large ribosomal subunit protein uL15 (154 aa).

The tract at residues 1-54 is disordered; sequence MKLHDLTPAPGSRKPKKRVGRGPGGTDKTAGRGHKGQKSRSGAGKGPFFEGGRS.

This sequence belongs to the universal ribosomal protein uL15 family. In terms of assembly, part of the 50S ribosomal subunit.

In terms of biological role, binds to the 23S rRNA. The protein is Large ribosomal subunit protein uL15 of Deinococcus geothermalis (strain DSM 11300 / CIP 105573 / AG-3a).